The primary structure comprises 79 residues: uncharacterized protein (79 aa).

A signal peptide spans 1 to 33; it reads MRLIIRAIVLLALVWIGLLMSGYGILVGSKVNA.

This is an uncharacterized protein from Salmonella typhi.